Consider the following 113-residue polypeptide: Hydrogenase maturation factor HypA (113 aa).

H2 provides a ligand contact to Ni(2+). Residues C73, C76, C89, and C92 each coordinate Zn(2+).

Belongs to the HypA/HybF family.

Its function is as follows. Involved in the maturation of [NiFe] hydrogenases. Required for nickel insertion into the metal center of the hydrogenase. The sequence is that of Hydrogenase maturation factor HypA from Xanthobacter autotrophicus (strain ATCC BAA-1158 / Py2).